The chain runs to 628 residues: RING finger protein 112 (628 aa).

The segment at Cys57–Arg98 adopts an RING-type zinc-finger fold. Residues Ala132–Glu628 form an interaction with ZBTB16 region. In terms of domain architecture, GB1/RHD3-type G spans Asp167 to Arg409. Arg318–Asp319 is a binding site for GTP. The next 2 membrane-spanning stretches (helical) occupy residues Leu544–Gly564 and Gly577–Val597.

This sequence belongs to the TRAFAC class dynamin-like GTPase superfamily. GB1/RHD3 GTPase family. GB1 subfamily. In terms of assembly, self-associates. Interacts with SP1 in an oxidative stress-regulated manner. Interacts with SIGMAR1 in an oxidative stress-regulated manner. Interacts with ZBTB16 (via C2H2-type zinc finger domains 1 and 2). In terms of processing, auto-ubiquitinated.

It localises to the membrane. It is found in the cytoplasm. Its subcellular location is the nucleus. The protein localises to the nuclear body. The protein resides in the nucleoplasm. It localises to the endosome. It is found in the cytoplasmic vesicle. Its subcellular location is the secretory vesicle. The protein localises to the synaptic vesicle. The protein resides in the postsynaptic density. It localises to the perikaryon. It is found in the cell projection. Its subcellular location is the neuron projection. The catalysed reaction is S-ubiquitinyl-[E2 ubiquitin-conjugating enzyme]-L-cysteine + [acceptor protein]-L-lysine = [E2 ubiquitin-conjugating enzyme]-L-cysteine + N(6)-ubiquitinyl-[acceptor protein]-L-lysine.. It functions in the pathway protein modification; protein ubiquitination. Its function is as follows. E3 ubiquitin-protein ligase that plays an important role in neuronal differentiation, including neurogenesis and gliogenesis, during brain development. During embryonic development initiates neuronal differentiation by inducing cell cycle arrest at the G0/G1 phase through up-regulation of cell-cycle regulatory proteins. Plays a role not only in the fetal period during the development of the nervous system, but also in the adult brain, where it is involved in the maintenance of neural functions and protection of the nervous tissue cells from oxidative stress-induced damage. Exhibits GTPase and E3 ubiquitin-protein ligase activities. Regulates dendritic spine density and synaptic neurotransmission; its ability to hydrolyze GTP is involved in the maintenance of dendritic spine density. The polypeptide is RING finger protein 112 (RNF112) (Bos taurus (Bovine)).